Reading from the N-terminus, the 423-residue chain is Adenylosuccinate synthetase (423 aa).

GTP is bound by residues 12-18 (GDEGKGK) and 40-42 (GHT). Asp13 acts as the Proton acceptor in catalysis. The Mg(2+) site is built by Asp13 and Gly40. Residues 13-16 (DEGK), 38-41 (NAGH), Thr129, Arg143, Gln224, Thr239, and Arg303 each bind IMP. His41 acts as the Proton donor in catalysis. 299–305 (SVTGRQR) contacts substrate. Residues Arg305, 331–333 (KGD), and 412–414 (SVG) each bind GTP.

It belongs to the adenylosuccinate synthetase family. In terms of assembly, homodimer. The cofactor is Mg(2+).

The protein localises to the cytoplasm. It catalyses the reaction IMP + L-aspartate + GTP = N(6)-(1,2-dicarboxyethyl)-AMP + GDP + phosphate + 2 H(+). Its pathway is purine metabolism; AMP biosynthesis via de novo pathway; AMP from IMP: step 1/2. Plays an important role in the de novo pathway of purine nucleotide biosynthesis. Catalyzes the first committed step in the biosynthesis of AMP from IMP. This is Adenylosuccinate synthetase from Flavobacterium psychrophilum (strain ATCC 49511 / DSM 21280 / CIP 103535 / JIP02/86).